The sequence spans 117 residues: Mitochondrial import inner membrane translocase subunit Tim10B (117 aa).

A Twin CX3C motif motif is present at residues 22–46 (CFSRCVDNLSQRDLGGHEDLCVDRC). 2 disulfide bridges follow: C22-C46 and C26-C42. Over residues 75 to 97 (EMEENARKAEQQQREQEKERLKE) the composition is skewed to basic and acidic residues. Residues 75 to 117 (EMEENARKAEQQQREQEKERLKEAAATAVLTPVQPPVAGNLSM) form a disordered region.

This sequence belongs to the small Tim family. As to quaternary structure, component of the TIM22 complex, whose core is composed of Tim22, associated with peripheral protein Tim9b/Tim10b and the 70 kDa heterohexamer. In most cases, the 70 kDa complex is composed of TIMM9 and TIMM10.

The protein resides in the mitochondrion inner membrane. In terms of biological role, component of the TIM22 complex, a complex that mediates the import and insertion of multi-pass transmembrane proteins into the mitochondrial inner membrane. The TIM22 complex forms a twin-pore translocase that uses the membrane potential as the external driving force. In the TIM22 complex, it may act as a docking point for the soluble 70 kDa complex that guides the target proteins in transit through the aqueous mitochondrial intermembrane space. The polypeptide is Mitochondrial import inner membrane translocase subunit Tim10B (Tim9b) (Drosophila melanogaster (Fruit fly)).